The primary structure comprises 102 residues: Integration host factor subunit beta (102 aa).

Belongs to the bacterial histone-like protein family. As to quaternary structure, heterodimer of an alpha and a beta chain.

Functionally, this protein is one of the two subunits of integration host factor, a specific DNA-binding protein that functions in genetic recombination as well as in transcriptional and translational control. The chain is Integration host factor subunit beta from Rhizobium rhizogenes (strain K84 / ATCC BAA-868) (Agrobacterium radiobacter).